The following is a 125-amino-acid chain: NADPH-dependent 7-cyano-7-deazaguanine reductase (125 aa).

Cys-41 (thioimide intermediate) is an active-site residue. The active-site Proton donor is the Asp-48. Residues 63 to 65 (VEL) and 82 to 83 (HE) contribute to the substrate site.

The protein belongs to the GTP cyclohydrolase I family. QueF type 1 subfamily.

It is found in the cytoplasm. It carries out the reaction 7-aminomethyl-7-carbaguanine + 2 NADP(+) = 7-cyano-7-deazaguanine + 2 NADPH + 3 H(+). It participates in tRNA modification; tRNA-queuosine biosynthesis. Functionally, catalyzes the NADPH-dependent reduction of 7-cyano-7-deazaguanine (preQ0) to 7-aminomethyl-7-deazaguanine (preQ1). This is NADPH-dependent 7-cyano-7-deazaguanine reductase from Sulfurimonas denitrificans (strain ATCC 33889 / DSM 1251) (Thiomicrospira denitrificans (strain ATCC 33889 / DSM 1251)).